Reading from the N-terminus, the 459-residue chain is DNA-binding protein P3A2 (459 aa).

Positions 1 to 25 (MMISEDISEPSSPDTPFDDSDLLNS) are disordered.

This sequence belongs to the NRF1/Ewg family.

The protein localises to the nucleus. Transcriptional regulator that interacts with specific sites in the control region of the cyIIIa actin gene. Also binds specifically to similar target sites located in the regulatory region of the SM50 gene. This is DNA-binding protein P3A2 from Strongylocentrotus purpuratus (Purple sea urchin).